A 189-amino-acid chain; its full sequence is Lutzicidin (189 aa).

An N-terminal signal peptide occupies residues 1–22 (MQGFFWKTLLVVALCGTSSSLA). Positions 23–155 (HRPLSYGEAL…DEEKDRPKRV (133 aa)) are excised as a propeptide. 2 disulfides stabilise this stretch: Cys79–Cys90 and Cys101–Cys118. Residues 125-148 (EEEEEDEEEQKAEVEKDEEKEDEE) show a composition bias toward acidic residues. Positions 125–152 (EEEEEDEEEQKAEVEKDEEKEDEEKDRP) are disordered.

The protein belongs to the cathelicidin family. Expressed by the venom gland.

The protein localises to the secreted. The protein resides in the target cell membrane. Functionally, potent antimicrobial peptide against Gram-negative and Gram-positive bacteria. Adopts an amphipathic alpha helical conformation, that may allow to partition into the target membrane. Low hemolytic activities have been observed on mammalian cells. This is Lutzicidin from Bothrops lutzi (Sertao lancehead).